The following is a 264-amino-acid chain: Somatomedin-B and thrombospondin type-1 domain-containing protein (264 aa).

An N-terminal signal peptide occupies residues 1-20; the sequence is MRTLWMALCVLARLWPGALA. One can recognise an SMB domain in the interval 24–75; the sequence is DAGRCCPGRDPACFASGWRQDRVYGTCFCDQACRLTGDCCFDYARACPARPC. 7 cysteine pairs are disulfide-bonded: Cys28/Cys36, Cys28/Cys52, Cys36/Cys70, Cys50/Cys52, Cys50/Cys63, Cys56/Cys62, and Cys63/Cys70. Residues 74 to 127 enclose the TSP type-1 domain; it reads PCIVGEWSPWSGCASQCRPTARVRRRAVQQEPQNGGEPCPALEERAGCLEYATP. N-linked (GlcNAc...) asparagine glycosylation occurs at Asn227.

It belongs to the thrombospondin family.

The protein localises to the secreted. It is found in the extracellular space. It localises to the extracellular matrix. This chain is Somatomedin-B and thrombospondin type-1 domain-containing protein (SBSPON), found in Bos taurus (Bovine).